Consider the following 373-residue polypeptide: SUN domain-containing protein 5 (373 aa).

Residues 1-103 (MPRTRNIGAL…LFCQKVMEKM (103 aa)) lie on the Nuclear side of the membrane. A helical transmembrane segment spans residues 104-120 (GLLVLCVFGFWMFSMHL). Residues 121-373 (PSKVEVWQDD…PKDSHLEPLS (253 aa)) are Perinuclear space-facing. A coiled-coil region spans residues 136 to 180 (LQSLRMYQEKVRHHTGEIQDLRGSMNQLIAKLQKMEAISDEQKMA). Residues 204–362 (ASIDFEHTSA…YRVRVHGSVT (159 aa)) enclose the SUN domain.

Probable homotrimer. Interacts with DNAJB13. Post-translationally, highly glycosylated in the Golgi apparatus during spermiogenesis. In terms of tissue distribution, testis-specific, abundantly expressed in spermatocytes and round spermatids.

Its subcellular location is the nucleus inner membrane. The protein resides in the golgi apparatus. In terms of biological role, plays an essential role in anchoring sperm head to the tail. Is responsible for the attachment of the coupling apparatus to the sperm nuclear envelope. The sequence is that of SUN domain-containing protein 5 (Sun5) from Mus musculus (Mouse).